The primary structure comprises 206 residues: Tetrathionate response regulatory protein TtrR (206 aa).

The 115-residue stretch at Thr-3–Leu-117 folds into the Response regulatory domain. Residue Asp-52 is modified to 4-aspartylphosphate. Residues Gln-134–Ala-194 enclose the HTH luxR-type domain. Residues Asn-153–Ala-172 constitute a DNA-binding region (H-T-H motif).

Post-translationally, phosphorylated by TtrS.

Its subcellular location is the cytoplasm. Its function is as follows. Member of the two-component regulatory system TtrR/TtrS, which is required for synthesis of tetrathionate reductase. Positively regulates transcription of the ttrBCA operon. During mice infection, the ability to use tetrathionate as an electron acceptor is a growth advantage for S.typhimurium over the competing microbiota in the lumen of the inflamed gut. This Salmonella typhimurium (strain LT2 / SGSC1412 / ATCC 700720) protein is Tetrathionate response regulatory protein TtrR (ttrR).